The primary structure comprises 509 residues: Maturase K (509 aa).

This sequence belongs to the intron maturase 2 family. MatK subfamily.

The protein resides in the plastid. It is found in the chloroplast. Its function is as follows. Usually encoded in the trnK tRNA gene intron. Probably assists in splicing its own and other chloroplast group II introns. The chain is Maturase K from Citrus sinensis (Sweet orange).